An 810-amino-acid chain; its full sequence is Phenylalanine--tRNA ligase beta subunit (810 aa).

Residues Ala39 to Arg154 enclose the tRNA-binding domain. Residues Pro405–Ala480 enclose the B5 domain. Asp458, Asp464, Glu467, and Glu468 together coordinate Mg(2+). The 103-residue stretch at Ser707–Arg809 folds into the FDX-ACB domain.

Belongs to the phenylalanyl-tRNA synthetase beta subunit family. Type 1 subfamily. In terms of assembly, tetramer of two alpha and two beta subunits. Requires Mg(2+) as cofactor.

It is found in the cytoplasm. The catalysed reaction is tRNA(Phe) + L-phenylalanine + ATP = L-phenylalanyl-tRNA(Phe) + AMP + diphosphate + H(+). The protein is Phenylalanine--tRNA ligase beta subunit of Burkholderia mallei (strain ATCC 23344).